A 79-amino-acid polypeptide reads, in one-letter code: Dermaseptin-S8 (79 aa).

The N-terminal stretch at 1-22 (MDILKKSLFLVLFLGLVSLSIC) is a signal peptide. Residues 23–45 (EEEKRENEDEEKQEDDEQSEMKR) constitute a propeptide that is removed on maturation. The residue at position 76 (Gln-76) is a Glutamine amide. The propeptide occupies 78-79 (AQ).

It belongs to the frog skin active peptide (FSAP) family. Dermaseptin subfamily. In terms of tissue distribution, expressed by the skin glands.

The protein localises to the secreted. Functionally, potent antimicrobial peptide with activity against bacteria, fungi and protozoa. Probably acts by disturbing membrane functions with its amphipathic structure. This chain is Dermaseptin-S8, found in Phyllomedusa sauvagei (Sauvage's leaf frog).